Reading from the N-terminus, the 148-residue chain is 15 kDa excretory/secretory protein (148 aa).

The signal sequence occupies residues 1-19 (MFFAFAVLLIALATREAYG).

This sequence to T.colubriformis 30 kDa antigenic glycoprotein.

It localises to the secreted. This is 15 kDa excretory/secretory protein from Haemonchus contortus (Barber pole worm).